The sequence spans 453 residues: Protein LOW PSII ACCUMULATION 1, chloroplastic (453 aa).

Residues M1 to K92 constitute a chloroplast transit peptide. 2 TPR repeats span residues A75–P108 and Q112–K145. 2 helical membrane-spanning segments follow: residues F202–L222 and T238–W258.

In terms of assembly, interacts with psbA, but not with psbD, petB, ALB3, LPA2 or LPA3. Is not a component of the PSII complex.

The protein localises to the plastid. It is found in the chloroplast thylakoid membrane. Chaperone required for efficient photosystem II (PSII) assembly. Binds to psbA during de novo biogenesis of PSII. The protein is Protein LOW PSII ACCUMULATION 1, chloroplastic (LPA1) of Arabidopsis thaliana (Mouse-ear cress).